The following is a 1124-amino-acid chain: Ras-associating and dilute domain-containing protein (1124 aa).

Residues 61-164 (APGVLKIFGD…RRFELRRRAE (104 aa)) enclose the Ras-associating domain. Positions 226-253 (YYSTLPGPIRTRSARDSEIRKERDGGGV) are disordered. Residues 238 to 252 (SARDSEIRKERDGGG) are compositionally biased toward basic and acidic residues. Residues 284 to 342 (HTVGQETASARPNICLSSPDVLPLHCRIRRAAQRRSSSDQRLLLEPVAHGNVLVNFMRI) enclose the FHA domain. One can recognise a Dilute domain in the interval 516-809 (ASLSLLSISD…VDLLESFENH (294 aa)). 2 disordered regions span residues 850–942 (THPS…TPPN) and 960–982 (PEHASQEHTHTHSHTKTNGCMRS). The span at 866-876 (PPQPHSSPHPA) shows a compositional bias: pro residues. The segment covering 903-912 (AEDRTRDKPT) has biased composition (basic and acidic residues). Residues 926 to 937 (ANQSQATDSSCI) are compositionally biased toward polar residues. A compositionally biased stretch (basic and acidic residues) spans 960–969 (PEHASQEHTH). Positions 1027–1112 (VVDLDKGPYG…RLRFLVAKSD (86 aa)) constitute a PDZ domain.

This sequence belongs to the RADIL family. As to quaternary structure, interacts with RAP1A; in a GTP-dependent manner. In terms of tissue distribution, ubiquitously expressed and enriched in the anterior part of the embryos.

Downstream effector of Rap required for cell adhesion and migration of neural crest precursors during development. The protein is Ras-associating and dilute domain-containing protein (radil) of Danio rerio (Zebrafish).